A 195-amino-acid chain; its full sequence is uncharacterized protein (195 aa).

This is an uncharacterized protein from Archaeoglobus fulgidus (strain ATCC 49558 / DSM 4304 / JCM 9628 / NBRC 100126 / VC-16).